A 160-amino-acid chain; its full sequence is Transcriptional repressor NrdR (160 aa).

The segment covering 1–11 has biased composition (polar residues); that stretch reads MRCPSCNSLDT. The tract at residues 1 to 20 is disordered; that stretch reads MRCPSCNSLDTQVKDSRPTE. The segment at 3–34 is a zinc-finger region; sequence CPSCNSLDTQVKDSRPTEDSAVIRRRRVCMAC. An ATP-cone domain is found at 49 to 139; it reads LTVIKRNGRR…VYRNFREAKD (91 aa).

The protein belongs to the NrdR family. Requires Zn(2+) as cofactor.

Its function is as follows. Negatively regulates transcription of bacterial ribonucleotide reductase nrd genes and operons by binding to NrdR-boxes. This chain is Transcriptional repressor NrdR, found in Nitrobacter hamburgensis (strain DSM 10229 / NCIMB 13809 / X14).